A 562-amino-acid polypeptide reads, in one-letter code: Probable malate:quinone oxidoreductase (562 aa).

The protein belongs to the MQO family. The cofactor is FAD.

It carries out the reaction (S)-malate + a quinone = a quinol + oxaloacetate. It functions in the pathway carbohydrate metabolism; tricarboxylic acid cycle; oxaloacetate from (S)-malate (quinone route): step 1/1. In Stenotrophomonas maltophilia (strain K279a), this protein is Probable malate:quinone oxidoreductase.